The primary structure comprises 1438 residues: DNA-directed RNA polymerase subunit beta' (1438 aa).

Cys70, Cys72, Cys85, and Cys88 together coordinate Zn(2+). Residues Asp461, Asp463, and Asp465 each coordinate Mg(2+). Cys821, Cys895, Cys902, and Cys905 together coordinate Zn(2+). The segment covering 1413 to 1427 (DAMAAAMGGDSAGGD) has biased composition (low complexity). Residues 1413-1438 (DAMAAAMGGDSAGGDTKPEAPEASEE) form a disordered region.

Belongs to the RNA polymerase beta' chain family. As to quaternary structure, the RNAP catalytic core consists of 2 alpha, 1 beta, 1 beta' and 1 omega subunit. When a sigma factor is associated with the core the holoenzyme is formed, which can initiate transcription. It depends on Mg(2+) as a cofactor. Zn(2+) serves as cofactor.

The catalysed reaction is RNA(n) + a ribonucleoside 5'-triphosphate = RNA(n+1) + diphosphate. DNA-dependent RNA polymerase catalyzes the transcription of DNA into RNA using the four ribonucleoside triphosphates as substrates. This chain is DNA-directed RNA polymerase subunit beta', found in Erythrobacter litoralis (strain HTCC2594).